The chain runs to 99 residues: MKRSLKNNPFVANPLLRKMEKLNRREDKILIRTWSRASTIILTMIGHTIAIHNGKEHLPIYITDYMVGHKLGEFAPTINFHEHAKNDNKSRRSKMRIDY.

This sequence belongs to the universal ribosomal protein uS19 family.

Its subcellular location is the plastid. The protein resides in the chloroplast. Its function is as follows. Protein S19 forms a complex with S13 that binds strongly to the 16S ribosomal RNA. The sequence is that of Small ribosomal subunit protein uS19c from Oenothera biennis (German evening primrose).